A 260-amino-acid chain; its full sequence is tRNA (guanine-N(1)-)-methyltransferase (260 aa).

Residues Gly-117 and 137–142 each bind S-adenosyl-L-methionine; that span reads LGDFVL.

It belongs to the RNA methyltransferase TrmD family. As to quaternary structure, homodimer.

The protein localises to the cytoplasm. It carries out the reaction guanosine(37) in tRNA + S-adenosyl-L-methionine = N(1)-methylguanosine(37) in tRNA + S-adenosyl-L-homocysteine + H(+). Functionally, specifically methylates guanosine-37 in various tRNAs. This chain is tRNA (guanine-N(1)-)-methyltransferase, found in Cupriavidus necator (strain ATCC 17699 / DSM 428 / KCTC 22496 / NCIMB 10442 / H16 / Stanier 337) (Ralstonia eutropha).